The primary structure comprises 131 residues: Small ribosomal subunit protein uS11 (131 aa).

It belongs to the universal ribosomal protein uS11 family. As to quaternary structure, part of the 30S ribosomal subunit. Interacts with proteins S7 and S18. Binds to IF-3.

Functionally, located on the platform of the 30S subunit, it bridges several disparate RNA helices of the 16S rRNA. Forms part of the Shine-Dalgarno cleft in the 70S ribosome. This chain is Small ribosomal subunit protein uS11, found in Wolinella succinogenes (strain ATCC 29543 / DSM 1740 / CCUG 13145 / JCM 31913 / LMG 7466 / NCTC 11488 / FDC 602W) (Vibrio succinogenes).